The chain runs to 440 residues: Enolase (440 aa).

Gln-168 lines the (2R)-2-phosphoglycerate pocket. Residue Glu-210 is the Proton donor of the active site. Mg(2+)-binding residues include Asp-249, Glu-300, and Asp-326. The (2R)-2-phosphoglycerate site is built by Lys-351, Arg-380, Ser-381, and Lys-402. Residue Lys-351 is the Proton acceptor of the active site.

The protein belongs to the enolase family. It depends on Mg(2+) as a cofactor.

The protein resides in the cytoplasm. The protein localises to the secreted. Its subcellular location is the cell surface. It carries out the reaction (2R)-2-phosphoglycerate = phosphoenolpyruvate + H2O. The protein operates within carbohydrate degradation; glycolysis; pyruvate from D-glyceraldehyde 3-phosphate: step 4/5. Its function is as follows. Catalyzes the reversible conversion of 2-phosphoglycerate (2-PG) into phosphoenolpyruvate (PEP). It is essential for the degradation of carbohydrates via glycolysis. In Ureaplasma parvum serovar 3 (strain ATCC 27815 / 27 / NCTC 11736), this protein is Enolase.